A 119-amino-acid chain; its full sequence is Ribonuclease P protein component (119 aa).

This sequence belongs to the RnpA family. As to quaternary structure, consists of a catalytic RNA component (M1 or rnpB) and a protein subunit.

The enzyme catalyses Endonucleolytic cleavage of RNA, removing 5'-extranucleotides from tRNA precursor.. Functionally, RNaseP catalyzes the removal of the 5'-leader sequence from pre-tRNA to produce the mature 5'-terminus. It can also cleave other RNA substrates such as 4.5S RNA. The protein component plays an auxiliary but essential role in vivo by binding to the 5'-leader sequence and broadening the substrate specificity of the ribozyme. This Escherichia coli O6:H1 (strain CFT073 / ATCC 700928 / UPEC) protein is Ribonuclease P protein component.